A 342-amino-acid polypeptide reads, in one-letter code: Phosphoribosylformylglycinamidine cyclo-ligase (342 aa).

It belongs to the AIR synthase family.

The protein resides in the cytoplasm. It catalyses the reaction 2-formamido-N(1)-(5-O-phospho-beta-D-ribosyl)acetamidine + ATP = 5-amino-1-(5-phospho-beta-D-ribosyl)imidazole + ADP + phosphate + H(+). It participates in purine metabolism; IMP biosynthesis via de novo pathway; 5-amino-1-(5-phospho-D-ribosyl)imidazole from N(2)-formyl-N(1)-(5-phospho-D-ribosyl)glycinamide: step 2/2. The protein is Phosphoribosylformylglycinamidine cyclo-ligase of Gloeothece citriformis (strain PCC 7424) (Cyanothece sp. (strain PCC 7424)).